The following is a 301-amino-acid chain: dTDP-4-dehydrorhamnose reductase (301 aa).

Residues 10 to 12 (GQV), D30, 39 to 40 (DF), and 63 to 65 (AHT) each bind NADH. 11 to 12 (QV) contributes to the NADPH binding site. NADPH is bound by residues 39–40 (DF), 63–65 (AHT), and Y102. 104 to 105 (TD) provides a ligand contact to dTDP-beta-L-rhamnose. Y129 and K133 together coordinate NADH. Residues Y129 and K133 each coordinate NADPH. Y129 serves as the catalytic Proton donor/acceptor. Residue W155 coordinates dTDP-beta-L-rhamnose.

It belongs to the dTDP-4-dehydrorhamnose reductase family. As to quaternary structure, homodimer. The cofactor is Mg(2+).

The catalysed reaction is dTDP-beta-L-rhamnose + NADP(+) = dTDP-4-dehydro-beta-L-rhamnose + NADPH + H(+). Its pathway is carbohydrate biosynthesis; dTDP-L-rhamnose biosynthesis. The protein operates within bacterial outer membrane biogenesis; LPS O-antigen biosynthesis. In terms of biological role, involved in the biosynthesis of the dTDP-L-rhamnose which is an important component of lipopolysaccharide (LPS). Catalyzes the reduction of dTDP-6-deoxy-L-lyxo-4-hexulose to yield dTDP-L-rhamnose. RmlD uses NADH and NADPH nearly equally well. The chain is dTDP-4-dehydrorhamnose reductase from Escherichia coli.